Reading from the N-terminus, the 401-residue chain is Probable tRNA sulfurtransferase (401 aa).

The THUMP domain occupies 60-165 (EEICSLLKNI…EEATFLTIRN (106 aa)). Residues 183-184 (ML), 208-209 (HF), arginine 265, glycine 287, and glutamine 296 contribute to the ATP site.

The protein belongs to the ThiI family.

The protein resides in the cytoplasm. The enzyme catalyses [ThiI sulfur-carrier protein]-S-sulfanyl-L-cysteine + a uridine in tRNA + 2 reduced [2Fe-2S]-[ferredoxin] + ATP + H(+) = [ThiI sulfur-carrier protein]-L-cysteine + a 4-thiouridine in tRNA + 2 oxidized [2Fe-2S]-[ferredoxin] + AMP + diphosphate. It catalyses the reaction [ThiS sulfur-carrier protein]-C-terminal Gly-Gly-AMP + S-sulfanyl-L-cysteinyl-[cysteine desulfurase] + AH2 = [ThiS sulfur-carrier protein]-C-terminal-Gly-aminoethanethioate + L-cysteinyl-[cysteine desulfurase] + A + AMP + 2 H(+). Its pathway is cofactor biosynthesis; thiamine diphosphate biosynthesis. In terms of biological role, catalyzes the ATP-dependent transfer of a sulfur to tRNA to produce 4-thiouridine in position 8 of tRNAs, which functions as a near-UV photosensor. Also catalyzes the transfer of sulfur to the sulfur carrier protein ThiS, forming ThiS-thiocarboxylate. This is a step in the synthesis of thiazole, in the thiamine biosynthesis pathway. The sulfur is donated as persulfide by IscS. The protein is Probable tRNA sulfurtransferase of Bacillus velezensis (strain DSM 23117 / BGSC 10A6 / LMG 26770 / FZB42) (Bacillus amyloliquefaciens subsp. plantarum).